Consider the following 274-residue polypeptide: Large ribosomal subunit protein uL2 (274 aa).

Residues 224 to 259 (AMNPVDHPHGGGEGRTSGGRHPVTPWGIPTKGYKTR) are disordered.

Belongs to the universal ribosomal protein uL2 family. Part of the 50S ribosomal subunit. Forms a bridge to the 30S subunit in the 70S ribosome.

One of the primary rRNA binding proteins. Required for association of the 30S and 50S subunits to form the 70S ribosome, for tRNA binding and peptide bond formation. It has been suggested to have peptidyltransferase activity; this is somewhat controversial. Makes several contacts with the 16S rRNA in the 70S ribosome. This Geobacter sp. (strain M21) protein is Large ribosomal subunit protein uL2.